Consider the following 334-residue polypeptide: Protein translocase subunit SecF (334 aa).

Helical transmembrane passes span valine 18–glycine 38, glycine 144–phenylalanine 164, phenylalanine 168–phenylalanine 190, serine 195–phenylalanine 217, alanine 258–alanine 278, and phenylalanine 279–isoleucine 299.

It belongs to the SecD/SecF family. SecF subfamily. As to quaternary structure, forms a complex with SecD. Part of the essential Sec protein translocation apparatus which comprises SecA, SecYEG and auxiliary proteins SecDF. Other proteins may also be involved.

It is found in the cell inner membrane. Its function is as follows. Part of the Sec protein translocase complex. Interacts with the SecYEG preprotein conducting channel. SecDF uses the proton motive force (PMF) to complete protein translocation after the ATP-dependent function of SecA. In Gemmatimonas aurantiaca (strain DSM 14586 / JCM 11422 / NBRC 100505 / T-27), this protein is Protein translocase subunit SecF.